A 146-amino-acid chain; its full sequence is Hemoglobin subunit beta (146 aa).

Residues 2 to 146 enclose the Globin domain; the sequence is HWSAEEKQLI…VAHALARKYH (145 aa). Residues H63 and H92 each coordinate heme b.

This sequence belongs to the globin family. Heterotetramer of two alpha chains and two beta chains. Red blood cells.

Functionally, involved in oxygen transport from the lung to the various peripheral tissues. In Columba livia (Rock dove), this protein is Hemoglobin subunit beta (HBB).